Reading from the N-terminus, the 151-residue chain is Aspartate carbamoyltransferase regulatory chain (151 aa).

Residues C108, C113, C136, and C139 each contribute to the Zn(2+) site.

This sequence belongs to the PyrI family. In terms of assembly, contains catalytic and regulatory chains. Zn(2+) is required as a cofactor.

Its function is as follows. Involved in allosteric regulation of aspartate carbamoyltransferase. The sequence is that of Aspartate carbamoyltransferase regulatory chain from Porphyromonas gingivalis (strain ATCC 33277 / DSM 20709 / CIP 103683 / JCM 12257 / NCTC 11834 / 2561).